A 474-amino-acid polypeptide reads, in one-letter code: UDP-N-acetylmuramate--L-alanine ligase (474 aa).

108–114 lines the ATP pocket; sequence GTHGKTT.

This sequence belongs to the MurCDEF family.

The protein localises to the cytoplasm. The enzyme catalyses UDP-N-acetyl-alpha-D-muramate + L-alanine + ATP = UDP-N-acetyl-alpha-D-muramoyl-L-alanine + ADP + phosphate + H(+). The protein operates within cell wall biogenesis; peptidoglycan biosynthesis. Its function is as follows. Cell wall formation. The chain is UDP-N-acetylmuramate--L-alanine ligase from Chloroflexus aggregans (strain MD-66 / DSM 9485).